The following is a 214-amino-acid chain: Endothelin-3 (214 aa).

The signal sequence occupies residues 1–16; sequence MEPGLWLLLGLTVTSA. Positions 17 to 94 are excised as a propeptide; it reads AGLVPCPQSG…DKGLPAHHRP (78 aa). The interval 24–91 is disordered; it reads QSGDSGRASV…KQEDKGLPAH (68 aa). The segment covering 25-35 has biased composition (polar residues); the sequence is SGDSGRASVSQ. 2 cysteine pairs are disulfide-bonded: Cys97/Cys111 and Cys99/Cys107. Residues 118 to 214 constitute a propeptide that is removed on maturation; sequence INTPEQTVPY…MSRTDKAHRP (97 aa). Residues 159–173 form an endothelin-like region; the sequence is CTCMGADDKACAHFC. The tract at residues 183–214 is disordered; that stretch reads SGRAERPAAEEMRETGGPRQRLMSRTDKAHRP. The span at 185–198 shows a compositional bias: basic and acidic residues; the sequence is RAERPAAEEMRETG.

Belongs to the endothelin/sarafotoxin family.

The protein localises to the secreted. Functionally, endothelins are endothelium-derived vasoconstrictor peptides. The polypeptide is Endothelin-3 (Edn3) (Mus musculus (Mouse)).